The primary structure comprises 129 residues: Lysozyme C (129 aa).

The region spanning 1–129 is the C-type lysozyme domain; the sequence is KVYGRCELAA…VHAWIRGCRL (129 aa). 4 disulfides stabilise this stretch: Cys-6/Cys-127, Cys-30/Cys-115, Cys-64/Cys-80, and Cys-76/Cys-94. Catalysis depends on residues Glu-35 and Asp-52.

This sequence belongs to the glycosyl hydrolase 22 family. In terms of assembly, monomer.

It is found in the secreted. The enzyme catalyses Hydrolysis of (1-&gt;4)-beta-linkages between N-acetylmuramic acid and N-acetyl-D-glucosamine residues in a peptidoglycan and between N-acetyl-D-glucosamine residues in chitodextrins.. Lysozymes have primarily a bacteriolytic function; those in tissues and body fluids are associated with the monocyte-macrophage system and enhance the activity of immunoagents. In Lophophorus impejanus (Himalayan monal pheasant), this protein is Lysozyme C (LYZ).